Consider the following 168-residue polypeptide: Gastrula zinc finger protein XlCGF42.1 (168 aa).

6 consecutive C2H2-type zinc fingers follow at residues 6–28, 34–56, 62–84, 90–112, 118–140, and 146–165; these read YSCSDCGKCFTRRWNLSEHRKSH, FCCSVCGKGFSYHSQMKSHYRTH, CICSECGKSFTDHAGLRIHQKYH, FSCSECGKCFTRRSGLTAHLRIH, YTCTECGKCFTCRTDLARHLRIH, and FTCSQCEKSFASHSDLDRHH.

This sequence belongs to the krueppel C2H2-type zinc-finger protein family.

It localises to the nucleus. May be involved in transcriptional regulation. The polypeptide is Gastrula zinc finger protein XlCGF42.1 (Xenopus laevis (African clawed frog)).